The chain runs to 152 residues: Transcriptional regulator MraZ (152 aa).

SpoVT-AbrB domains are found at residues 5 to 52 (ASAI…PLEA) and 81 to 124 (AHEC…DEAA).

It belongs to the MraZ family. In terms of assembly, forms oligomers.

The protein localises to the cytoplasm. It is found in the nucleoid. The polypeptide is Transcriptional regulator MraZ (Shewanella loihica (strain ATCC BAA-1088 / PV-4)).